We begin with the raw amino-acid sequence, 332 residues long: Protein FAM131B (332 aa).

Positions 1 to 22 (MDSTSSLHGSSLHRPSTEQTRT) are disordered. Phosphoserine occurs at positions 47, 114, and 117. The tract at residues 221-332 (LGPAFDDSQP…FDEEEGDANN (112 aa)) is disordered. 2 stretches are compositionally biased toward basic and acidic residues: residues 272 to 281 (PVEEEKRPLA) and 288 to 302 (AGCR…REDP). Residues Ser295, Ser297, and Ser313 each carry the phosphoserine modification. At Thr316 the chain carries Phosphothreonine. 3 positions are modified to phosphoserine: Ser317, Ser318, and Ser322. Positions 323–332 (FDEEEGDANN) are enriched in acidic residues.

It belongs to the FAM131 family.

This Rattus norvegicus (Rat) protein is Protein FAM131B (Fam131b).